The chain runs to 504 residues: ATP synthase subunit alpha (504 aa).

169-176 (GDRQTGKT) is a binding site for ATP.

The protein belongs to the ATPase alpha/beta chains family. As to quaternary structure, F-type ATPases have 2 components, CF(1) - the catalytic core - and CF(0) - the membrane proton channel. CF(1) has five subunits: alpha(3), beta(3), gamma(1), delta(1), epsilon(1). CF(0) has three main subunits: a(1), b(2) and c(9-12). The alpha and beta chains form an alternating ring which encloses part of the gamma chain. CF(1) is attached to CF(0) by a central stalk formed by the gamma and epsilon chains, while a peripheral stalk is formed by the delta and b chains.

Its subcellular location is the cell membrane. It catalyses the reaction ATP + H2O + 4 H(+)(in) = ADP + phosphate + 5 H(+)(out). Produces ATP from ADP in the presence of a proton gradient across the membrane. The alpha chain is a regulatory subunit. The sequence is that of ATP synthase subunit alpha from Clostridium botulinum (strain Loch Maree / Type A3).